The sequence spans 536 residues: Solute carrier family 2, facilitated glucose transporter member 10 (536 aa).

The Cytoplasmic portion of the chain corresponds to Met-1 to Ser-15. Residues Leu-16–Leu-36 form a helical membrane-spanning segment. At Gln-37–Glu-48 the chain is on the extracellular side. A helical membrane pass occupies residues Leu-49 to Ile-69. At Asp-70–Asn-82 the chain is on the cytoplasmic side. Residues Ala-83 to Leu-103 traverse the membrane as a helical segment. Over Gly-104–Ser-107 the chain is Extracellular. The chain crosses the membrane as a helical span at residues Val-108–Gly-128. Residues Pro-129–Arg-132 are Cytoplasmic-facing. Residues Gly-133–Leu-153 traverse the membrane as a helical segment. Over Asn-154–His-166 the chain is Extracellular. The chain crosses the membrane as a helical span at residues Met-167–Ala-187. At Gly-188 to Thr-232 the chain is on the cytoplasmic side. Residues Val-233–Tyr-253 traverse the membrane as a helical segment. Residue Gln-242–Gln-243 participates in D-glucose binding. At Ala-254–Ala-269 the chain is on the extracellular side. A helical transmembrane segment spans residues Val-270–Leu-290. The Cytoplasmic segment spans residues Val-291 to Val-298. The chain crosses the membrane as a helical span at residues Leu-299–Phe-319. Residues Ala-320–Thr-402 lie on the Extracellular side of the membrane. A helical transmembrane segment spans residues Leu-403–Phe-423. The Cytoplasmic portion of the chain corresponds to Gly-424 to Arg-442. Trp-428 serves as a coordination point for D-glucose. Residues Ala-443 to Leu-463 form a helical membrane-spanning segment. The Extracellular portion of the chain corresponds to Asp-464–Ala-468. Residues Ile-469–Ile-489 traverse the membrane as a helical segment. Residues Tyr-490–Ser-536 lie on the Cytoplasmic side of the membrane.

This sequence belongs to the major facilitator superfamily. Sugar transporter (TC 2.A.1.1) family. Glucose transporter subfamily.

Its subcellular location is the endomembrane system. It localises to the cytoplasm. The protein localises to the perinuclear region. It catalyses the reaction D-glucose(out) = D-glucose(in). In terms of biological role, facilitative glucose transporter required for the development of the cardiovascular system. The protein is Solute carrier family 2, facilitated glucose transporter member 10 of Mus musculus (Mouse).